A 230-amino-acid polypeptide reads, in one-letter code: MPLFQLDEHDVTFPAPHLALKEPSGLLAIGGDISPARLKEAYQTGIFPWYTPHETPLWWSPDPRAVLPAGTLHIGRTLRKFLRQAPYTITLNQAFSDVIEACSVRDEGTWIGPDIKTGYRALHQQGEAHSVEVWEGDELIGGLYGVNVGAVFCGESMFSRRNNASKCAFVAFYNHFLRYGGQLFDCQVLNSHTAALGAIEIARDRYLEALSRWKKVIIDKKCWYQQSLEL.

Belongs to the L/F-transferase family.

The protein localises to the cytoplasm. It carries out the reaction N-terminal L-lysyl-[protein] + L-leucyl-tRNA(Leu) = N-terminal L-leucyl-L-lysyl-[protein] + tRNA(Leu) + H(+). The enzyme catalyses N-terminal L-arginyl-[protein] + L-leucyl-tRNA(Leu) = N-terminal L-leucyl-L-arginyl-[protein] + tRNA(Leu) + H(+). It catalyses the reaction L-phenylalanyl-tRNA(Phe) + an N-terminal L-alpha-aminoacyl-[protein] = an N-terminal L-phenylalanyl-L-alpha-aminoacyl-[protein] + tRNA(Phe). Functionally, functions in the N-end rule pathway of protein degradation where it conjugates Leu, Phe and, less efficiently, Met from aminoacyl-tRNAs to the N-termini of proteins containing an N-terminal arginine or lysine. The sequence is that of Leucyl/phenylalanyl-tRNA--protein transferase from Proteus mirabilis (strain HI4320).